The primary structure comprises 157 residues: Transcriptional repressor NrdR (157 aa).

Residues 3-34 (CPFCNTVDTKVIDSRLVSEGSQIKRRRQCAIC) fold into a zinc finger. One can recognise an ATP-cone domain in the interval 49–139 (PRVIKNDDLL…VYRSFEDVRE (91 aa)).

This sequence belongs to the NrdR family. Requires Zn(2+) as cofactor.

Functionally, negatively regulates transcription of bacterial ribonucleotide reductase nrd genes and operons by binding to NrdR-boxes. The protein is Transcriptional repressor NrdR of Hamiltonella defensa subsp. Acyrthosiphon pisum (strain 5AT).